A 234-amino-acid polypeptide reads, in one-letter code: Glucosamine-6-phosphate deaminase (234 aa).

D63 (proton acceptor; for enolization step) is an active-site residue. N129 (for ring-opening step) is an active-site residue. Residue H131 is the Proton acceptor; for ring-opening step of the active site. E136 acts as the For ring-opening step in catalysis.

The protein belongs to the glucosamine/galactosamine-6-phosphate isomerase family. NagB subfamily.

The catalysed reaction is alpha-D-glucosamine 6-phosphate + H2O = beta-D-fructose 6-phosphate + NH4(+). It participates in amino-sugar metabolism; N-acetylneuraminate degradation; D-fructose 6-phosphate from N-acetylneuraminate: step 5/5. Its function is as follows. Catalyzes the reversible isomerization-deamination of glucosamine 6-phosphate (GlcN6P) to form fructose 6-phosphate (Fru6P) and ammonium ion. This Listeria welshimeri serovar 6b (strain ATCC 35897 / DSM 20650 / CCUG 15529 / CIP 8149 / NCTC 11857 / SLCC 5334 / V8) protein is Glucosamine-6-phosphate deaminase.